Consider the following 563-residue polypeptide: Quinidine resistance protein 1 (563 aa).

Polar residues predominate over residues 1-10 (MTKQQTSVMR). The tract at residues 1-50 (MTKQQTSVMRNASIAKEEREGSDNNNVDRSSSDAISDNDAERSNSHSEID) is disordered. Topologically, residues 1-75 (MTKQQTSVMR…KQKMLLVVQC (75 aa)) are cytoplasmic. Residues 23 to 33 (DNNNVDRSSSD) show a composition bias toward low complexity. Over residues 39–49 (DAERSNSHSEI) the composition is skewed to basic and acidic residues. The chain crosses the membrane as a helical span at residues 76–96 (AFTGFFSTVAGSIYYPVLTII). Residues 97 to 108 (ERKFNITEELAN) lie on the Extracellular side of the membrane. Residues 109 to 129 (VTIVVYFIFQGVAPSIMGGLA) form a helical membrane-spanning segment. At 130 to 135 (DTFGRR) the chain is on the cytoplasmic side. A helical membrane pass occupies residues 136–156 (PIVLWAILAYFCACIGLACAH). Residues 157–165 (NYAQILALR) lie on the Extracellular side of the membrane. The chain crosses the membrane as a helical span at residues 166-186 (CLQAAGISPVIAINSGIMGDV). Topologically, residues 187–195 (TTKVERGGY) are cytoplasmic. A helical transmembrane segment spans residues 196–216 (VGLVAGFQVVGTAFGALIGAG). The Extracellular portion of the chain corresponds to 217 to 224 (LSSKWGWR). A helical membrane pass occupies residues 225–245 (AIFWFLAIGSGICLVFSTLLM). Topologically, residues 246 to 296 (PETKRTLVGNGSVTPRSFLNRSLILHVGSVKKTLHLDDPDPETLEPRTSVD) are cytoplasmic. A helical membrane pass occupies residues 297–317 (FLAPLKILHIREIDILLSIAG). Residues 318–341 (LQFSTWTTHQTALTIVLSKKYNLS) are Extracellular-facing. The helical transmembrane segment at 342 to 362 (VAKIGLCFLPAGISTLTSIIS) threads the bilayer. Over 363-421 (AGRYLNWSYRTRKVKYNRWIKEQELQLMEKYKGDKNKVAELIHSNSHYAFNLVEARLHP) the chain is Cytoplasmic. Residues 422–442 (AFVTLLLSSIGFTAFGWCISV) form a helical membrane-spanning segment. At 443-445 (KTP) the chain is on the extracellular side. A helical transmembrane segment spans residues 446–466 (LAAVLCTSAFASLFSNCILTF). The Cytoplasmic segment spans residues 467 to 481 (STTLIVDLFPSKAST). Residues 482-502 (ATGCLNLFRCLLSAIFIAALT) traverse the membrane as a helical segment. At 503–511 (KMVEKMRYG) the chain is on the extracellular side. The chain crosses the membrane as a helical span at residues 512–532 (GVFTFLSAITSSSSLLLFYLL). The Cytoplasmic segment spans residues 533–563 (KNGKQLSFDRIRANDKSAGRSVGKNSEKVST).

Belongs to the major facilitator superfamily. CAR1 family.

Its subcellular location is the cell membrane. Multidrug resistance transporter involved in resistance and adaptation to quinidine and ketoconazole. This is Quinidine resistance protein 1 (QDR1) from Saccharomyces cerevisiae (strain ATCC 204508 / S288c) (Baker's yeast).